The following is a 365-amino-acid chain: MLAVGAMEGPRQSAFLLSSPPLAALHSMAEMKTPLYPAAYPPLPTGPPSSSSSSSSSSSPSPPLGAHNPGGLKPPAAGGLSSLGSPPQQLSAATPHGINDILSRPSMPVASGAALPSASPSGSSSSSSSSASATSASAAAAAAAAAAAAAASSPAGLLAGLPRFSSLSPPPPPPGLYFSPSAAAVAAVGRYPKPLAELPGRTPIFWPGVMQSPPWRDARLACTPHQGSILLDKDGKRKHTRPTFSGQQIFALEKTFEQTKYLAGPERARLAYSLGMTESQVKVWFQNRRTKWRKKHAAEMATAKKKQDSETERLKGTSENEEDDDDYNKPLDPNSDDEKITQLLKKHKSSGGSLLLHASEAEGSS.

The interval 35 to 136 (LYPAAYPPLP…SSSSASATSA (102 aa)) is disordered. Composition is skewed to low complexity over residues 48–59 (PSSSSSSSSSSS), 69–92 (PGGL…QLSA), and 110–136 (ASGA…ATSA). Residues 102-269 (LSRPSMPVAS…KYLAGPERAR (168 aa)) are repressor domain. R190 carries the post-translational modification Asymmetric dimethylarginine. Residues 237–296 (RKHTRPTFSGQQIFALEKTFEQTKYLAGPERARLAYSLGMTESQVKVWFQNRRTKWRKKH) constitute a DNA-binding region (homeobox). The interval 295–365 (KHAAEMATAK…LHASEAEGSS (71 aa)) is disordered. Over residues 305-318 (KKQDSETERLKGTS) the composition is skewed to basic and acidic residues. The involved in DNA-binding stretch occupies residues 307–365 (QDSETERLKGTSENEEDDDDYNKPLDPNSDDEKITQLLKKHKSSGGSLLLHASEAEGSS).

Pancreatic beta cells.

The protein resides in the nucleus. Functionally, transcription factor which binds to specific A/T-rich DNA sequences in the promoter regions of a number of genes. Involved in the development of insulin-producing beta cells in the islets of Langerhans at the secondary transition. Together with NKX2-2 and IRX3 acts to restrict the generation of motor neurons to the appropriate region of the neural tube. Belongs to the class II proteins of neuronal progenitor factors, which are induced by SHH signals. The polypeptide is Homeobox protein Nkx-6.1 (Nkx6-1) (Rattus norvegicus (Rat)).